The chain runs to 335 residues: Phosphate acyltransferase (335 aa).

The protein belongs to the PlsX family. Homodimer. Probably interacts with PlsY.

The protein resides in the cytoplasm. It catalyses the reaction a fatty acyl-[ACP] + phosphate = an acyl phosphate + holo-[ACP]. Its pathway is lipid metabolism; phospholipid metabolism. Catalyzes the reversible formation of acyl-phosphate (acyl-PO(4)) from acyl-[acyl-carrier-protein] (acyl-ACP). This enzyme utilizes acyl-ACP as fatty acyl donor, but not acyl-CoA. The protein is Phosphate acyltransferase of Desulforudis audaxviator (strain MP104C).